Here is an 859-residue protein sequence, read N- to C-terminus: Probable potassium transporter 14 (859 aa).

Over residues 1-19 (METRSGGSGSASGGGGGGR) the composition is skewed to gly residues. The tract at residues 1–69 (METRSGGSGS…SRGGCSDSDD (69 aa)) is disordered. Over 1-112 (METRSGGSGS…RHQEITVGRS (112 aa)) the chain is Cytoplasmic. The segment covering 54 to 65 (PAAASGSRGGCS) has biased composition (low complexity). A helical transmembrane segment spans residues 113-133 (IVLAVQTLGVVFGDVGTSPLY). Over 134 to 155 (AFDVMFNKYPITSKEDVLGALS) the chain is Extracellular. A helical membrane pass occupies residues 156–176 (LVIYTLILIPLLKYTLIALWG). Over 177-240 (NDDGEGGTFA…RLETSSMLKK (64 aa)) the chain is Cytoplasmic. The helical transmembrane segment at 241–261 (LLLMLVLFGTSMVIADGVVTP) threads the bilayer. At 262-275 (AMSVMSAVNGLKVG) the chain is on the extracellular side. Residues 276–296 (ISSVNEGEVVMITVAVLIVLF) form a helical membrane-spanning segment. The Cytoplasmic portion of the chain corresponds to 297-305 (TLQRFGSSK). Residues 306–326 (VALAVGPALFIWFCCLAGIGI) form a helical membrane-spanning segment. Residues 327-359 (YNMKTYGSAVLQAFNPMYIYYYFERNPTQAWMS) lie on the Extracellular side of the membrane. A helical transmembrane segment spans residues 360 to 380 (LGGCLLCATGSEAMFADLCYF). Residues 381-388 (SVKSVQLT) lie on the Cytoplasmic side of the membrane. The helical transmembrane segment at 389 to 409 (FVFLVLPCLLLGYLGQAAFLM) threads the bilayer. Over 410–417 (ENLTENQQ) the chain is Extracellular. Asn411 carries N-linked (GlcNAc...) asparagine glycosylation. Residues 418–438 (VFFLSIPNQAFWPVVFIAILA) traverse the membrane as a helical segment. At 439-478 (AIIASRTMTTAIFSTIKQATALGCFPRLKIIHTSRSFMGQ) the chain is on the cytoplasmic side. The chain crosses the membrane as a helical span at residues 479–499 (IYIPMMNWFLLVSCLAFVTMF). Over 500–508 (GSINEIGNA) the chain is Extracellular. The chain crosses the membrane as a helical span at residues 509-531 (YGIAELGVMMMTTVLVTIIMLLI). Topologically, residues 532-535 (WQIN) are cytoplasmic. A helical membrane pass occupies residues 536–558 (IIVVLCFLTLSLGLELIFFSSVL). Over 559 to 560 (GS) the chain is Extracellular. A helical transmembrane segment spans residues 561–581 (VADGSWVLLVFAAVLYLIMYI). Over 582 to 859 (WNYGTKLKYE…MMQVAMQYMV (278 aa)) the chain is Cytoplasmic. A disordered region spans residues 752-772 (GVPPAEAAGTTEHPTIGSSMS). A compositionally biased stretch (polar residues) spans 763–772 (EHPTIGSSMS).

This sequence belongs to the HAK/KUP transporter (TC 2.A.72.3) family.

The protein localises to the membrane. Its function is as follows. High-affinity potassium transporter. This chain is Probable potassium transporter 14 (HAK14), found in Oryza sativa subsp. japonica (Rice).